The chain runs to 222 residues: Octanoyltransferase (222 aa).

The BPL/LPL catalytic domain maps to 34–214 (GEKNSTVLIL…EFSKHDEALV (181 aa)). Residues 72–79 (RGGKLTWH), 144–146 (AIG), and 157–159 (GVA) each bind substrate. Residue Cys175 is the Acyl-thioester intermediate of the active site.

This sequence belongs to the LipB family.

It localises to the cytoplasm. The enzyme catalyses octanoyl-[ACP] + L-lysyl-[protein] = N(6)-octanoyl-L-lysyl-[protein] + holo-[ACP] + H(+). The protein operates within protein modification; protein lipoylation via endogenous pathway; protein N(6)-(lipoyl)lysine from octanoyl-[acyl-carrier-protein]: step 1/2. Functionally, catalyzes the transfer of endogenously produced octanoic acid from octanoyl-acyl-carrier-protein onto the lipoyl domains of lipoate-dependent enzymes. Lipoyl-ACP can also act as a substrate although octanoyl-ACP is likely to be the physiological substrate. In Paenarthrobacter aurescens (strain TC1), this protein is Octanoyltransferase.